The sequence spans 147 residues: UPF0306 protein YhbP (147 aa).

This sequence belongs to the UPF0306 family.

The chain is UPF0306 protein YhbP from Escherichia coli O8 (strain IAI1).